Reading from the N-terminus, the 564-residue chain is DNA ligase B (564 aa).

Lys130 serves as the catalytic N6-AMP-lysine intermediate.

Belongs to the NAD-dependent DNA ligase family. LigB subfamily.

It catalyses the reaction NAD(+) + (deoxyribonucleotide)n-3'-hydroxyl + 5'-phospho-(deoxyribonucleotide)m = (deoxyribonucleotide)n+m + AMP + beta-nicotinamide D-nucleotide.. Its function is as follows. Catalyzes the formation of phosphodiester linkages between 5'-phosphoryl and 3'-hydroxyl groups in double-stranded DNA using NAD as a coenzyme and as the energy source for the reaction. The sequence is that of DNA ligase B from Klebsiella pneumoniae subsp. pneumoniae (strain ATCC 700721 / MGH 78578).